A 155-amino-acid chain; its full sequence is MRCPFCGHDETQVKDSRPSEDGAAIRRRRLCPQCEGRFTTFERVQLREITILKRSGRRTPFDRDKLARSISIALRKRPVEPERIERMISTIVRQLESMGETELPSSTIGELVMKQLKQLDDVAYVRYASVYRDFRETQDFARFLGEEGLSEAAES.

A disordered region spans residues 1-22; it reads MRCPFCGHDETQVKDSRPSEDG. A zinc finger spans residues 3-34; that stretch reads CPFCGHDETQVKDSRPSEDGAAIRRRRLCPQC. Positions 7–22 are enriched in basic and acidic residues; sequence GHDETQVKDSRPSEDG. The region spanning 49 to 139 is the ATP-cone domain; the sequence is ITILKRSGRR…VYRDFRETQD (91 aa).

This sequence belongs to the NrdR family. Zn(2+) serves as cofactor.

Negatively regulates transcription of bacterial ribonucleotide reductase nrd genes and operons by binding to NrdR-boxes. The sequence is that of Transcriptional repressor NrdR from Phenylobacterium zucineum (strain HLK1).